The primary structure comprises 610 residues: Dihydroxy-acid dehydratase (610 aa).

Asp81 serves as a coordination point for Mg(2+). Residue Cys122 participates in [2Fe-2S] cluster binding. Residues Asp123 and Lys124 each contribute to the Mg(2+) site. Residue Lys124 is modified to N6-carboxylysine. Position 193 (Cys193) interacts with [2Fe-2S] cluster. Glu489 provides a ligand contact to Mg(2+). Residue Ser515 is the Proton acceptor of the active site.

The protein belongs to the IlvD/Edd family. In terms of assembly, homodimer. It depends on [2Fe-2S] cluster as a cofactor. Mg(2+) serves as cofactor.

The enzyme catalyses (2R)-2,3-dihydroxy-3-methylbutanoate = 3-methyl-2-oxobutanoate + H2O. It catalyses the reaction (2R,3R)-2,3-dihydroxy-3-methylpentanoate = (S)-3-methyl-2-oxopentanoate + H2O. The protein operates within amino-acid biosynthesis; L-isoleucine biosynthesis; L-isoleucine from 2-oxobutanoate: step 3/4. It functions in the pathway amino-acid biosynthesis; L-valine biosynthesis; L-valine from pyruvate: step 3/4. Functions in the biosynthesis of branched-chain amino acids. Catalyzes the dehydration of (2R,3R)-2,3-dihydroxy-3-methylpentanoate (2,3-dihydroxy-3-methylvalerate) into 2-oxo-3-methylpentanoate (2-oxo-3-methylvalerate) and of (2R)-2,3-dihydroxy-3-methylbutanoate (2,3-dihydroxyisovalerate) into 2-oxo-3-methylbutanoate (2-oxoisovalerate), the penultimate precursor to L-isoleucine and L-valine, respectively. This Xylella fastidiosa (strain 9a5c) protein is Dihydroxy-acid dehydratase.